A 233-amino-acid chain; its full sequence is Demethylmenaquinone methyltransferase (233 aa).

S-adenosyl-L-methionine-binding positions include Thr-58, Asp-79, and 106 to 107 (NA).

Belongs to the class I-like SAM-binding methyltransferase superfamily. MenG/UbiE family.

The enzyme catalyses a 2-demethylmenaquinol + S-adenosyl-L-methionine = a menaquinol + S-adenosyl-L-homocysteine + H(+). It functions in the pathway quinol/quinone metabolism; menaquinone biosynthesis; menaquinol from 1,4-dihydroxy-2-naphthoate: step 2/2. Its function is as follows. Methyltransferase required for the conversion of demethylmenaquinol (DMKH2) to menaquinol (MKH2). This chain is Demethylmenaquinone methyltransferase, found in Bacillus velezensis (strain DSM 23117 / BGSC 10A6 / LMG 26770 / FZB42) (Bacillus amyloliquefaciens subsp. plantarum).